Consider the following 283-residue polypeptide: DegV domain-containing protein lmo2514 (283 aa).

Positions 5–282 constitute a DegV domain; sequence IAVVTDSTTY…EGALGLTWSI (278 aa). Residues Ser63 and Ser96 each contribute to the hexadecanoate site.

Its function is as follows. May bind long-chain fatty acids, such as palmitate, and may play a role in lipid transport or fatty acid metabolism. The sequence is that of DegV domain-containing protein lmo2514 from Listeria monocytogenes serovar 1/2a (strain ATCC BAA-679 / EGD-e).